The following is a 1133-amino-acid chain: uncharacterized protein (1133 aa).

Disordered stretches follow at residues 33–83, 305–629, 679–723, and 736–817; these read QFED…NSSS, PVSN…NSNS, GKLD…SVKR, and IESP…SEEV. A compositionally biased stretch (low complexity) spans 39-83; it reads NNNNSNNNNNNNNSNNNNSNNNENINRKTGSTLLSSSTSQLNSSS. Positions 40 to 308 form a DNA-binding region, NDT80; sequence NNNSNNNNNN…GHPTCNPVSN (269 aa). Residues 305 to 316 are compositionally biased toward polar residues; it reads PVSNNPSTPGTP. Over residues 317 to 384 the composition is skewed to low complexity; the sequence is ISNFDSSNNN…NNNSSGNSSS (68 aa). A compositionally biased stretch (polar residues) spans 401–417; sequence INSLSNHNSPHLTPIQY. Residues 418–452 show a composition bias toward low complexity; that stretch reads NNNNNNSNNNSNNNNNNNNNNNNSNNNNNNSNNNN. The segment covering 453–470 has biased composition (polar residues); the sequence is HQFQSNNRIFKGNLSNPF. Composition is skewed to low complexity over residues 473–615 and 686–714; these read NYSQ…GNNS and NNSN…NNNN. Residues 736-747 show a composition bias toward polar residues; sequence IESPQSYISSPT. Residues 757–771 are compositionally biased toward pro residues; it reads QPQPQPQPQPQPQPQ. The segment covering 772-808 has biased composition (low complexity); sequence PQSQSQSQSQSQSQSQSQSQSQSQPIQQIVQQQLSSP. In terms of domain architecture, Peptidase S74 spans 909–1020; it reads SDKRVKENVK…KKVDNVCMEL (112 aa). The chain crosses the membrane as a helical span at residues 1055-1075; it reads IFIGIGVFTLFVIFGLVAVSI. Positions 1107–1133 are disordered; it reads SGSNSCYDSSSNSAIDTTTSTGSGSIK.

It is found in the membrane. This is an uncharacterized protein from Dictyostelium discoideum (Social amoeba).